The following is a 94-amino-acid chain: ESAT-6-like protein EsxL (94 aa).

It belongs to the WXG100 family. ESAT-6 subfamily. In terms of assembly, strongly interacts with EsxK to form a heterodimeric complex under reducing conditions.

It localises to the secreted. The sequence is that of ESAT-6-like protein EsxL from Mycobacterium bovis (strain ATCC BAA-935 / AF2122/97).